The sequence spans 261 residues: Pyridoxine-5'-phosphate oxidase (261 aa).

42–45 (RGDR) is a pyridoxal 5'-phosphate binding site. 95–98 (RMLL) contributes to the FMN binding site. K100 serves as a coordination point for pyridoxal 5'-phosphate. Residues 110–111 (FT), 116–117 (RK), and Q139 contribute to the FMN site. Residues Y157, R161, and S165 each coordinate pyridoxal 5'-phosphate. FMN contacts are provided by residues 174-175 (QS) and W219. A pyridoxal 5'-phosphate-binding site is contributed by 225–227 (RLH). R229 contacts FMN. T238 is modified (phosphothreonine). Position 241 is a phosphoserine (S241).

The protein belongs to the pyridoxamine 5'-phosphate oxidase family. Homodimer. Requires FMN as cofactor. As to expression, ubiquitous. Expressed in liver, brain, lung, prostate and stomach (at protein level).

The catalysed reaction is pyridoxine 5'-phosphate + O2 = pyridoxal 5'-phosphate + H2O2. The enzyme catalyses pyridoxamine 5'-phosphate + O2 + H2O = pyridoxal 5'-phosphate + H2O2 + NH4(+). Its pathway is cofactor metabolism; pyridoxal 5'-phosphate salvage; pyridoxal 5'-phosphate from pyridoxamine 5'-phosphate: step 1/1. It participates in cofactor metabolism; pyridoxal 5'-phosphate salvage; pyridoxal 5'-phosphate from pyridoxine 5'-phosphate: step 1/1. Functionally, catalyzes the oxidation of either pyridoxine 5'-phosphate (PNP) or pyridoxamine 5'-phosphate (PMP) into pyridoxal 5'-phosphate (PLP). In Homo sapiens (Human), this protein is Pyridoxine-5'-phosphate oxidase (PNPO).